A 432-amino-acid chain; its full sequence is Phosphomethylpyrimidine synthase (432 aa).

Substrate is bound by residues asparagine 66, methionine 95, tyrosine 124, histidine 163, 185–187 (SRG), 226–229 (DGLR), and glutamate 265. Histidine 269 provides a ligand contact to Zn(2+). Position 292 (tyrosine 292) interacts with substrate. Histidine 333 serves as a coordination point for Zn(2+). Cysteine 409, cysteine 412, and cysteine 416 together coordinate [4Fe-4S] cluster.

This sequence belongs to the ThiC family. The cofactor is [4Fe-4S] cluster.

It carries out the reaction 5-amino-1-(5-phospho-beta-D-ribosyl)imidazole + S-adenosyl-L-methionine = 4-amino-2-methyl-5-(phosphooxymethyl)pyrimidine + CO + 5'-deoxyadenosine + formate + L-methionine + 3 H(+). Its pathway is cofactor biosynthesis; thiamine diphosphate biosynthesis. Functionally, catalyzes the synthesis of the hydroxymethylpyrimidine phosphate (HMP-P) moiety of thiamine from aminoimidazole ribotide (AIR) in a radical S-adenosyl-L-methionine (SAM)-dependent reaction. This Desulfitobacterium hafniense (strain DSM 10664 / DCB-2) protein is Phosphomethylpyrimidine synthase.